Consider the following 422-residue polypeptide: Serine hydroxymethyltransferase (422 aa).

(6S)-5,6,7,8-tetrahydrofolate is bound by residues Leu-120 and 124–126 (GHL). Lys-228 carries the N6-(pyridoxal phosphate)lysine modification.

Belongs to the SHMT family. In terms of assembly, homodimer. It depends on pyridoxal 5'-phosphate as a cofactor.

The protein localises to the cytoplasm. The enzyme catalyses (6R)-5,10-methylene-5,6,7,8-tetrahydrofolate + glycine + H2O = (6S)-5,6,7,8-tetrahydrofolate + L-serine. It participates in one-carbon metabolism; tetrahydrofolate interconversion. The protein operates within amino-acid biosynthesis; glycine biosynthesis; glycine from L-serine: step 1/1. Functionally, catalyzes the reversible interconversion of serine and glycine with tetrahydrofolate (THF) serving as the one-carbon carrier. This reaction serves as the major source of one-carbon groups required for the biosynthesis of purines, thymidylate, methionine, and other important biomolecules. Also exhibits THF-independent aldolase activity toward beta-hydroxyamino acids, producing glycine and aldehydes, via a retro-aldol mechanism. This chain is Serine hydroxymethyltransferase, found in Actinobacillus succinogenes (strain ATCC 55618 / DSM 22257 / CCUG 43843 / 130Z).